A 284-amino-acid chain; its full sequence is Nucleotide-binding protein PP_0949 (284 aa).

8–15 (GRSGSGKS) lines the ATP pocket. 60 to 63 (DARN) is a binding site for GTP.

Belongs to the RapZ-like family.

In terms of biological role, displays ATPase and GTPase activities. In Pseudomonas putida (strain ATCC 47054 / DSM 6125 / CFBP 8728 / NCIMB 11950 / KT2440), this protein is Nucleotide-binding protein PP_0949.